Reading from the N-terminus, the 562-residue chain is Oxygen-dependent choline dehydrogenase (562 aa).

4–33 (DYIIIGAGSAGNVLATRLTEDPNTSVLLLE) lines the FAD pocket. Catalysis depends on His473, which acts as the Proton acceptor.

This sequence belongs to the GMC oxidoreductase family. FAD is required as a cofactor.

The protein resides in the cell membrane. The catalysed reaction is choline + A = betaine aldehyde + AH2. It carries out the reaction betaine aldehyde + NAD(+) + H2O = glycine betaine + NADH + 2 H(+). It functions in the pathway amine and polyamine biosynthesis; betaine biosynthesis via choline pathway; betaine aldehyde from choline (cytochrome c reductase route): step 1/1. Functionally, involved in the biosynthesis of the osmoprotectant glycine betaine. Catalyzes the oxidation of choline to betaine aldehyde and betaine aldehyde to glycine betaine at the same rate. This Escherichia coli O157:H7 protein is Oxygen-dependent choline dehydrogenase.